The chain runs to 104 residues: MTYAIIEASGKQLWIEEGRYYDLNHIPVEPGQSIILGKVLLLNKDGHVSLGHPCIEGAVIKATVMRHLRGKKITVFKMKPKKKMRLKKGHRQELTRLMIDSIMT.

Belongs to the bacterial ribosomal protein bL21 family. In terms of assembly, part of the 50S ribosomal subunit.

The protein localises to the plastid. It is found in the chloroplast. Its function is as follows. This protein binds to 23S rRNA. The chain is Large ribosomal subunit protein bL21c from Porphyra purpurea (Red seaweed).